The following is a 483-amino-acid chain: Glutamyl-tRNA(Gln) amidotransferase subunit A (483 aa).

Catalysis depends on charge relay system residues Lys77 and Ser152. Ser176 acts as the Acyl-ester intermediate in catalysis.

It belongs to the amidase family. GatA subfamily. Heterotrimer of A, B and C subunits.

It catalyses the reaction L-glutamyl-tRNA(Gln) + L-glutamine + ATP + H2O = L-glutaminyl-tRNA(Gln) + L-glutamate + ADP + phosphate + H(+). Functionally, allows the formation of correctly charged Gln-tRNA(Gln) through the transamidation of misacylated Glu-tRNA(Gln) in organisms which lack glutaminyl-tRNA synthetase. The reaction takes place in the presence of glutamine and ATP through an activated gamma-phospho-Glu-tRNA(Gln). The sequence is that of Glutamyl-tRNA(Gln) amidotransferase subunit A from Listeria welshimeri serovar 6b (strain ATCC 35897 / DSM 20650 / CCUG 15529 / CIP 8149 / NCTC 11857 / SLCC 5334 / V8).